The following is a 176-amino-acid chain: Acireductone dioxygenase (176 aa).

Residues H91, H93, E97, and H136 each coordinate Fe(2+). Positions 91, 93, 97, and 136 each coordinate Ni(2+).

It belongs to the acireductone dioxygenase (ARD) family. Monomer. Requires Fe(2+) as cofactor. It depends on Ni(2+) as a cofactor.

It carries out the reaction 1,2-dihydroxy-5-(methylsulfanyl)pent-1-en-3-one + O2 = 3-(methylsulfanyl)propanoate + CO + formate + 2 H(+). The enzyme catalyses 1,2-dihydroxy-5-(methylsulfanyl)pent-1-en-3-one + O2 = 4-methylsulfanyl-2-oxobutanoate + formate + 2 H(+). Its pathway is amino-acid biosynthesis; L-methionine biosynthesis via salvage pathway; L-methionine from S-methyl-5-thio-alpha-D-ribose 1-phosphate: step 5/6. Functionally, catalyzes 2 different reactions between oxygen and the acireductone 1,2-dihydroxy-3-keto-5-methylthiopentene (DHK-MTPene) depending upon the metal bound in the active site. Fe-containing acireductone dioxygenase (Fe-ARD) produces formate and 2-keto-4-methylthiobutyrate (KMTB), the alpha-ketoacid precursor of methionine in the methionine recycle pathway. Ni-containing acireductone dioxygenase (Ni-ARD) produces methylthiopropionate, carbon monoxide and formate, and does not lie on the methionine recycle pathway. The polypeptide is Acireductone dioxygenase (Picosynechococcus sp. (strain ATCC 27264 / PCC 7002 / PR-6) (Agmenellum quadruplicatum)).